The primary structure comprises 323 residues: Prenyl transferase (323 aa).

Positions 46, 49, and 81 each coordinate isopentenyl diphosphate. Mg(2+) is bound by residues Asp88 and Asp92. Residue Arg97 participates in an all-trans-polyprenyl diphosphate binding. Arg98 serves as a coordination point for isopentenyl diphosphate. Lys174, Thr175, and Gln212 together coordinate an all-trans-polyprenyl diphosphate.

Belongs to the FPP/GGPP synthase family. Mg(2+) serves as cofactor.

The protein resides in the plastid. Its subcellular location is the cyanelle. In terms of biological role, possible role in synthesis of the nonaprenyl side chain of plastoquinone or in synthesis of other prenyl chains such as undekaprenyl pyrophosphate. The protein is Prenyl transferase (preA) of Cyanophora paradoxa.